We begin with the raw amino-acid sequence, 266 residues long: Protein crossbronx-like (266 aa).

The UBC core domain occupies 15–178 (KQGYHILAEY…VQEQAILSRN (164 aa)). Positions 226–266 (SEYLGHIDSSRQMDEEETNQLEKLHRGRIPEPQREEAEVSL) are disordered. Residues 245-266 (QLEKLHRGRIPEPQREEAEVSL) are compositionally biased toward basic and acidic residues.

This sequence belongs to the ubiquitin-conjugating enzyme family. FTS subfamily.

In Drosophila sechellia (Fruit fly), this protein is Protein crossbronx-like.